The following is a 195-amino-acid chain: 2-hydroxychromene-2-carboxylate isomerase (195 aa).

The Nucleophile role is filled by Ser-13. A glutathione-binding site is contributed by Ser-13. Residues Lys-45 and 55–56 (NR) contribute to the substrate site. 181-184 (WGND) provides a ligand contact to glutathione.

It belongs to the GST superfamily. NadH family. Requires glutathione as cofactor.

It carries out the reaction 2-hydroxychromene-2-carboxylate = (3E)-4-(2-hydroxyphenyl)-2-oxobut-3-enoate. Its activity is regulated as follows. Activated by salicylate. Involved in the naphthalene and naphthalenesulfonate catabolic pathway. Catalyzes the reversible glutathione-dependent isomerization of 2-hydroxychromene-2-carboxylate (HCCA) to trans-O-hydroxybenzylidenepyruvate (THBPA). It can also use 2-hydroxybenzo[g]chromene-2-carboxylate as substrate. The chain is 2-hydroxychromene-2-carboxylate isomerase (nsaD) from Sphingobium xenophagum.